The following is a 481-amino-acid chain: Glutamyl-tRNA(Gln) amidotransferase subunit A (481 aa).

Catalysis depends on charge relay system residues K78 and S153. The Acyl-ester intermediate role is filled by S177.

It belongs to the amidase family. GatA subfamily. In terms of assembly, heterotrimer of A, B and C subunits.

It catalyses the reaction L-glutamyl-tRNA(Gln) + L-glutamine + ATP + H2O = L-glutaminyl-tRNA(Gln) + L-glutamate + ADP + phosphate + H(+). Its function is as follows. Allows the formation of correctly charged Gln-tRNA(Gln) through the transamidation of misacylated Glu-tRNA(Gln) in organisms which lack glutaminyl-tRNA synthetase. The reaction takes place in the presence of glutamine and ATP through an activated gamma-phospho-Glu-tRNA(Gln). The chain is Glutamyl-tRNA(Gln) amidotransferase subunit A from Borreliella afzelii (strain PKo) (Borrelia afzelii).